Here is a 243-residue protein sequence, read N- to C-terminus: UMP-CMP kinase 2 (243 aa).

G69–T74 lines the ATP pocket. The interval S89–V118 is NMP. A ribonucleoside 5'-phosphate-binding positions include R95, K116–V118, and G143–R146. N150 lines the CMP pocket. The LID stretch occupies residues G181–D189. R182 provides a ligand contact to ATP. 2 residues coordinate a ribonucleoside 5'-phosphate: R186 and R197.

It belongs to the adenylate kinase family. UMP-CMP kinase subfamily. As to quaternary structure, monomer. Mg(2+) is required as a cofactor.

It is found in the cytoplasm. Its subcellular location is the nucleus. The enzyme catalyses UMP + ATP = UDP + ADP. It carries out the reaction CMP + ATP = CDP + ADP. The catalysed reaction is dCMP + ATP = dCDP + ADP. Functionally, catalyzes the phosphorylation of pyrimidine nucleoside monophosphates at the expense of ATP. Plays an important role in de novo pyrimidine nucleotide biosynthesis. Has preference for UMP and CMP as phosphate acceptors. This chain is UMP-CMP kinase 2, found in Oryza sativa subsp. japonica (Rice).